Here is a 361-residue protein sequence, read N- to C-terminus: Trehalose 6-phosphate phosphatase RA3 (361 aa).

It belongs to the trehalose phosphatase family. The cofactor is a divalent metal cation. In terms of tissue distribution, expressed in axillary inflorescence meristems.

It catalyses the reaction alpha,alpha-trehalose 6-phosphate + H2O = alpha,alpha-trehalose + phosphate. It functions in the pathway glycan biosynthesis; trehalose biosynthesis. Functionally, removes the phosphate from trehalose 6-phosphate to produce free trehalose. Is specific for trehalose 6-phosphate. Does not possess activity toward glucose, sucrose or fructose 6-phosphates. Regulates inflorescence branching. Required to establish the correct identity and determinacy of axillary meristems in both male and female inflorescences. May act through a sugar signal that moves into axillary meristems. Acts upstream of RA1. May have a transcriptional regulatory function. The chain is Trehalose 6-phosphate phosphatase RA3 from Zea mays (Maize).